The following is a 103-amino-acid chain: Potassium voltage-gated channel subfamily E member 3 (103 aa).

N-linked (GlcNAc...) asparagine glycosylation is found at Asn-5, Asn-22, and Asn-41. A disordered region spans residues 30–52; sequence LCRPGPGPGPDNQTEDRRASLPG. The chain crosses the membrane as a helical span at residues 57-77; sequence SYMYILFVMFLFAVTVGSLIL. Residues 68–79 form an interaction with KCNQ1 region; that stretch reads FAVTVGSLILGY. At 78 to 103 the chain is on the cytoplasmic side; the sequence is GYTRSRKVDKRSDPYHVYIKNRVSMI.

Belongs to the potassium channel KCNE family. As to quaternary structure, interacts with KCNB1. Interacts with KCNC2. Associates with KCNC4/Kv3.4. Interacts with KCNQ1; associates with a KCNQ1:KCNE3 stoichiometry of 4:4; produces a current with nearly instantaneous activation with a linear current-voltage relationship and alters membrane raft localization; affects KCNQ1 structure and gating properties.

The protein resides in the cell membrane. It localises to the cytoplasm. The protein localises to the perikaryon. It is found in the cell projection. Its subcellular location is the dendrite. The protein resides in the membrane raft. Ancillary protein that functions as a regulatory subunit of the voltage-gated potassium (Kv) channel complex composed of pore-forming and potassium-conducting alpha subunits and of regulatory beta subunits. KCNE3 beta subunit modulates the gating kinetics and enhances stability of the channel complex. Alters the gating of the delayed rectifier Kv channel containing KCNB1 alpha subunit. Associates with KCNC4/Kv3.4 alpha subunit to form the subthreshold Kv channel in skeletal muscle and to establish the resting membrane potential (RMP) in muscle cells. Association with KCNQ1/KCLQT1 alpha subunit may form the intestinal cAMP-stimulated potassium channel involved in chloride secretion that produces a current with nearly instantaneous activation with a linear current-voltage relationship. In Mus musculus (Mouse), this protein is Potassium voltage-gated channel subfamily E member 3.